The primary structure comprises 160 residues: NADH-quinone oxidoreductase subunit B (160 aa).

Cysteine 37, cysteine 38, cysteine 102, and cysteine 132 together coordinate [4Fe-4S] cluster.

This sequence belongs to the complex I 20 kDa subunit family. In terms of assembly, NDH-1 is composed of 14 different subunits. Subunits NuoB, C, D, E, F, and G constitute the peripheral sector of the complex. Requires [4Fe-4S] cluster as cofactor.

It is found in the cell membrane. The enzyme catalyses a quinone + NADH + 5 H(+)(in) = a quinol + NAD(+) + 4 H(+)(out). NDH-1 shuttles electrons from NADH, via FMN and iron-sulfur (Fe-S) centers, to quinones in the respiratory chain. Couples the redox reaction to proton translocation (for every two electrons transferred, four hydrogen ions are translocated across the cytoplasmic membrane), and thus conserves the redox energy in a proton gradient. The protein is NADH-quinone oxidoreductase subunit B of Polynucleobacter asymbioticus (strain DSM 18221 / CIP 109841 / QLW-P1DMWA-1) (Polynucleobacter necessarius subsp. asymbioticus).